Consider the following 421-residue polypeptide: Accessory Sec system protein translocase subunit SecY2 (421 aa).

The next 10 membrane-spanning stretches (helical) occupy residues 17 to 37, 69 to 89, 102 to 122, 139 to 159, 165 to 185, 204 to 224, 254 to 274, 299 to 319, 358 to 378, and 383 to 403; these read LWTSLIVFIFLIGRNILIPGV, FALGLGPWMSATILWRVLTLI, TFLFKIAIAIIIGFIQSIAII, FGAMATISLIMVSGAVFLVWL, ILGIGGPTVLILASMIINWPT, VILMLVIMISIVFLVLLTVVV, PAGGMPLMYSMTLLVLPQYIL, PLGVTAYIIILFALSIGFAFI, SFVGALYMSLIAGFPLYFGII, and TQYALTAGSIIILVNLVINII.

The protein belongs to the SecY/SEC61-alpha family. SecY2 subfamily. Component of the accessory SecA2/SecY2 protein translocase complex required to export cell wall proteins. May form heterotrimers with SecE and SecG subunits.

The protein resides in the cell membrane. Its function is as follows. Part of the accessory SecA2/SecY2 system specifically required for export of possible cell wall proteins. The central subunit of a protein translocation channel. In Leuconostoc gelidum subsp. gasicomitatum (strain DSM 15947 / CCUG 46042 / CECT 5767 / JCM 12535 / LMG 18811 / NBRC 113245 / TB1-10) (Leuconostoc gasicomitatum), this protein is Accessory Sec system protein translocase subunit SecY2.